We begin with the raw amino-acid sequence, 1091 residues long: LRR receptor-like serine/threonine-protein kinase RGI3 (1091 aa).

Positions 1–24 (MPPNIYRLSFFSSLLCFFFIPCFS) are cleaved as a signal peptide. Residues 25 to 703 (LDQQGQALLS…TTRNSSVVRL (679 aa)) are Extracellular-facing. An LRR 1 repeat occupies 33 to 56 (LSWKSQLNISGDAFSSWHVADTSP). N-linked (GlcNAc...) asparagine glycosylation is present at Asn-40. Cys-57 and Cys-64 form a disulfide bridge. LRR repeat units lie at residues 67 to 91 (RGEVSEIQLKGMDLQGSLPVTSLRS), 92 to 115 (LKSLTSLTLSSLNLTGVIPKEIGD), 116 to 140 (FTELELLDLSDNSLSGDIPVEIFRL), 142 to 166 (KLKTLSLNTNNLEGHIPMEIGNLSG), 168 to 188 (VELMLFDNKLSGEIPRSIGEL), 190 to 213 (NLQVLRAGGNKNLRGELPWEIGNC), 214 to 237 (ENLVMLGLAETSLSGKLPASIGNL), 239 to 261 (RVQTIAIYTSLLSGPIPDEIGYC), 262 to 285 (TELQNLYLYQNSISGSIPTTIGGL), 287 to 309 (KLQSLLLWQNNLVGKIPTELGNC), 311 to 332 (ELWLIDFSENLLTGTIPRSFGK), 333 to 357 (LENLQELQLSVNQISGTIPEELTNC), 359 to 383 (KLTHLEIDNNLITGEIPSLMSNLRS), 385 to 405 (TMFFAWQNKLTGNIPQSLSQC), 406 to 429 (RELQAIDLSYNSLSGSIPKEIFGL), 431 to 453 (NLTKLLLLSNDLSGFIPPDIGNC), 454 to 477 (TNLYRLRLNGNRLAGSIPSEIGNL), 478 to 501 (KNLNFVDISENRLVGSIPPAISGC), 503 to 524 (SLEFLDLHTNSLSGSLLGTTLP), 525 to 548 (KSLKFIDFSDNALSSTLPPGIGLL), 549 to 572 (TELTKLNLAKNRLSGEIPREISTC), 574 to 596 (SLQLLNLGENDFSGEIPDELGQI), 598 to 620 (SLAISLNLSCNRFVGEIPSRFSD), 621 to 644 (LKNLGVLDVSHNQLTGNLNVLTDL), 645 to 668 (QNLVSLNISYNDFSGDLPNTPFFR), and 669 to 690 (RLPLSDLASNRGLYISNAISTR). N-linked (GlcNAc...) asparagine glycosylation occurs at Asn-104. Asn-163 carries N-linked (GlcNAc...) asparagine glycosylation. 5 consecutive short sequence motifs (small peptide recognition) follow at residues 173 to 174 (FD), 195 to 198 (RAGG), 218 to 223 (MLGLAE), Tyr-246, and 268 to 270 (YLY). 2 consecutive short sequence motifs (small peptide recognition) follow at residues 316–319 (DFSE) and 338–340 (ELQ). Residue Asn-356 is glycosylated (N-linked (GlcNAc...) asparagine). Short sequence motifs (small peptide recognition) lie at residues 386–390 (MFFAW) and 412–415 (DLSY). Asn-431 is a glycosylation site (N-linked (GlcNAc...) asparagine). The Small peptide recognition signature appears at 434-438 (KLLLL). N-linked (GlcNAc...) asparagine glycosylation occurs at Asn-452. The Small peptide recognition signature appears at 458–460 (RLR). N-linked (GlcNAc...) asparagine glycosylation occurs at Asn-604. N-linked (GlcNAc...) asparagine glycosylation occurs at Asn-651. Asn-697 carries N-linked (GlcNAc...) asparagine glycosylation. The helical transmembrane segment at 704–724 (TILILVVVTAVLVLMAVYTLV) threads the bilayer. The Cytoplasmic segment spans residues 725–1091 (RARAAGKQLL…CSFAFSDDSV (367 aa)). In terms of domain architecture, Protein kinase spans 760–1046 (LTSANVIGTG…MLTEIRHIDV (287 aa)). ATP is bound by residues 766–774 (IGTGSSGVV) and Lys-788. Residues Tyr-831 and Tyr-870 each carry the phosphotyrosine modification. Asp-883 functions as the Proton acceptor in the catalytic mechanism. A Phosphotyrosine modification is found at Tyr-933.

The protein belongs to the protein kinase superfamily. Ser/Thr protein kinase family. As to quaternary structure, binds to RGF peptides such as RGF1, GLV5/CLEL1/RGF2, GLV7/CLEL3/RGF3, GLV3/RGF4, GLV10/CLEL7/RGF5 and RGF10/CLELN; these interactions trigger the formation of heterodimers with SERK1, SERK2 or BAK1/SERK3 via LRR regions. Phosphorylated and ubiquitinated upon interaction with RGF1, thus leading to activation a subsequent degradation. In terms of processing, autophosphorylated. Expressed in roots.

It is found in the cell membrane. The catalysed reaction is L-seryl-[protein] + ATP = O-phospho-L-seryl-[protein] + ADP + H(+). The enzyme catalyses L-threonyl-[protein] + ATP = O-phospho-L-threonyl-[protein] + ADP + H(+). In terms of biological role, together with RGI1, RGI2, RGI4 and RGI5, acts as a receptor of RGF peptides (e.g. RGF1, GLV5/CLEL1/RGF2, GLV7/CLEL3/RGF3, GLV3/RGF4, GLV10/CLEL7/RGF5 and RGF10/CLELN), peptide hormones which maintain the postembryonic root stem cell niche by regulating the expression levels and patterns of the transcription factor PLETHORA (PLT, e.g. PLT1 and PLT2). Links RGF peptides signal with their downstream components. The chain is LRR receptor-like serine/threonine-protein kinase RGI3 from Arabidopsis thaliana (Mouse-ear cress).